Here is a 349-residue protein sequence, read N- to C-terminus: Dehydrogenase FPY6 (349 aa).

It belongs to the Gfo/Idh/MocA family.

It functions in the pathway secondary metabolite biosynthesis. In terms of biological role, dehydrogenase; part of the gene cluster that mediates the biosynthesis of the gamma-pyrones fusapyrone (FPY) and deoxyfusapyrone (dFPY). FPY is an undecaketide and thus likely synthesized by the polyketide synthase FPY1 from acetyl-CoA functioning as starter unit and the addition of 10 malonyl-CoA extender units by successive Claisen-condensations. Next to this, FPY shares some rare features: C-glycosylated 4-deoxyglucose at C-3, a gem-dimethyl group at C-13, and an alpha-beta to beta-gamma double bond shift at C-20. During FPY biosynthesis mono-C-methyl groups are transferred to the tetra-, penta-, hexa- and heptaketide, while two C-methyl groups are transferred to the nonaketide, suggesting that the CMet domain is programmed to selectively catalyze two successive C-alpha-methylation reactions of the nonaketide, while other alpha-carbons are non- or mono-methylated only. While the origin of the 4'-deoxyglucose moiety remains opaque, its transfer to C-3 is most likely mediated by the C-glycosyltransferase FPY2. Next to this, the hydroxyl group present at C-33 and discriminating between FPY and dFPY, is likely to be installed by the cytochrome P450 monooxygenase FPY7. No putative function can be predicted for the remaining genes FPY3-FPY6. This is Dehydrogenase FPY6 from Fusarium mangiferae (Mango malformation disease fungus).